The chain runs to 276 residues: Homeobox-leucine zipper protein HOX22 (276 aa).

A DNA-binding region (homeobox) is located at residues A70–Q130. Positions K129–R173 are leucine-zipper. The tract at residues L170–G212 is disordered. Positions A182–S197 are enriched in low complexity.

Belongs to the HD-ZIP homeobox family. Class I subfamily. In terms of tissue distribution, expressed in seedlings, roots, stems, leaf sheaths and blades and panicles.

It localises to the nucleus. Probable transcription factor. The polypeptide is Homeobox-leucine zipper protein HOX22 (HOX22) (Oryza sativa subsp. japonica (Rice)).